The sequence spans 126 residues: VDVSGDAAAGEKAFRQCITCHVVVDDSGETLAGRNAKVGPNLYKVPGRHAGQIEGFRYSDSMSQAGQNGLVWVEEEFVKYVQDPTGYLREYLGDSKARGAMTHKVRKEDEAVDIYAYLASLGVHEE.

4 residues coordinate heme c: Cys-17, Cys-20, His-21, and Met-101.

This sequence belongs to the cytochrome c family. In terms of processing, binds 1 heme c group covalently per subunit.

The protein localises to the periplasm. Cytochrome c2 is found mainly in purple, non-sulfur, photosynthetic bacteria where it functions as the electron donor to the oxidized bacteriochlorophyll in the photophosphorylation pathway. However, it may also have a role in the respiratory chain and is found in some non-photosynthetic bacteria. The polypeptide is Cytochrome c2 (Rhodovulum adriaticum (Rhodopseudomonas adriatica)).